Reading from the N-terminus, the 320-residue chain is R2-like ligand binding oxidase (320 aa).

Mn(2+) is bound by residues E68, E101, and H104. A cross-link (3-(O4'-tyrosyl)-valine (Val-Tyr)) is located at residues 71 to 162 (VTKDIQPFMS…AAQVRASVVY (92 aa)). Fe cation is bound at residue E101. Residues E167, E202, and H205 each contribute to the Fe cation site.

It belongs to the ribonucleoside diphosphate reductase small chain family. R2-like ligand binding oxidase subfamily. In terms of assembly, homodimer. Fe cation is required as a cofactor. Requires Mn(2+) as cofactor.

Its function is as follows. Probable oxidase that might be involved in lipid metabolism. The protein is R2-like ligand binding oxidase (nrdB) of Mycolicibacterium smegmatis (strain ATCC 700084 / mc(2)155) (Mycobacterium smegmatis).